The following is a 95-amino-acid chain: Large ribosomal subunit protein uL23 (95 aa).

Belongs to the universal ribosomal protein uL23 family. Part of the 50S ribosomal subunit. Contacts protein L29, and trigger factor when it is bound to the ribosome.

Functionally, one of the early assembly proteins it binds 23S rRNA. One of the proteins that surrounds the polypeptide exit tunnel on the outside of the ribosome. Forms the main docking site for trigger factor binding to the ribosome. The sequence is that of Large ribosomal subunit protein uL23 from Coxiella burnetii (strain CbuK_Q154) (Coxiella burnetii (strain Q154)).